The chain runs to 117 residues: Holo-[acyl-carrier-protein] synthase (117 aa).

Residues Asp-8 and Glu-58 each contribute to the Mg(2+) site.

It belongs to the P-Pant transferase superfamily. AcpS family. It depends on Mg(2+) as a cofactor.

The protein resides in the cytoplasm. The catalysed reaction is apo-[ACP] + CoA = holo-[ACP] + adenosine 3',5'-bisphosphate + H(+). Transfers the 4'-phosphopantetheine moiety from coenzyme A to a Ser of acyl-carrier-protein. The protein is Holo-[acyl-carrier-protein] synthase of Staphylococcus epidermidis (strain ATCC 35984 / DSM 28319 / BCRC 17069 / CCUG 31568 / BM 3577 / RP62A).